Here is a 792-residue protein sequence, read N- to C-terminus: Ubiquitin carboxyl-terminal hydrolase 10 (792 aa).

At A2 the chain carries N-acetylalanine. Positions A2–I99 are interaction with p53/TP53. Residues P6–F21 are G3BP1-binding. Residue T24 is modified to Phosphothreonine. The segment at S126–G164 is disordered. Phosphoserine occurs at positions 208 and 223. Basic and acidic residues predominate over residues D300–K309. A disordered region spans residues D300 to A323. S314 carries the phosphoserine modification. The residue at position 330 (S330) is a Phosphoserine; by ATM. The disordered stretch occupies residues P350–E369. Phosphoserine is present on residues S359 and S364. One can recognise a USP domain in the interval R409–V789. The active-site Nucleophile is the C418. At S541 the chain carries Phosphoserine. A disordered region spans residues P542–K580. The residue at position 566 (T566) is a Phosphothreonine. Phosphoserine is present on S570. H743 serves as the catalytic Proton acceptor.

Belongs to the peptidase C19 family. USP10 subfamily. In terms of assembly, found in a deubiquitination complex with TANK, USP10 and ZC3H12A; this complex inhibits genotoxic stress- or interleukin-1-beta (IL1B)-mediated NF-kappa-B activation by promoting IKBKG or TRAF6 deubiquitination. Interacts with IKBKG; this interaction increases in response to DNA damage. Interacts with TANK; this interaction increases in response to DNA damage. Interacts with TRAF6; this interaction increases in response to DNA damage. Interacts with ZC3H12A; this interaction increases in response to DNA damage. Interacts with G3BP1 (via NTF2 domain) and G3BP2 (via NTF2 domain); inhibiting stress granule formation. Phosphorylated by ATM following DNA damage, leading to stabilization and translocation it to the nucleus. Post-translationally, ubiquitinated. Deubiquitinated by USP13.

It localises to the cytoplasm. It is found in the nucleus. The protein localises to the early endosome. The catalysed reaction is Thiol-dependent hydrolysis of ester, thioester, amide, peptide and isopeptide bonds formed by the C-terminal Gly of ubiquitin (a 76-residue protein attached to proteins as an intracellular targeting signal).. Specifically inhibited by spautin-1 (specific and potent autophagy inhibitor-1), a derivative of MBCQ that binds to USP10 and inhibits deubiquitinase activity. Regulated by PIK3C3/VPS34-containing complexes. Its function is as follows. Hydrolase that can remove conjugated ubiquitin from target proteins such as p53/TP53, RPS2/us5, RPS3/us3, RPS10/eS10, BECN1, SNX3 and CFTR. Acts as an essential regulator of p53/TP53 stability: in unstressed cells, specifically deubiquitinates p53/TP53 in the cytoplasm, leading to counteract MDM2 action and stabilize p53/TP53. Following DNA damage, translocates to the nucleus and deubiquitinates p53/TP53, leading to regulate the p53/TP53-dependent DNA damage response. Component of a regulatory loop that controls autophagy and p53/TP53 levels: mediates deubiquitination of BECN1, a key regulator of autophagy, leading to stabilize the PIK3C3/VPS34-containing complexes. In turn, PIK3C3/VPS34-containing complexes regulate USP10 stability, suggesting the existence of a regulatory system by which PIK3C3/VPS34-containing complexes regulate p53/TP53 protein levels via USP10 and USP13. Does not deubiquitinate MDM2. Plays a key role in 40S ribosome subunit recycling when a ribosome has stalled during translation: acts both by inhibiting formation of stress granules, which store stalled translation pre-initiation complexes, and mediating deubiquitination of 40S ribosome subunits. Acts as a negative regulator of stress granules formation by lowering G3BP1 and G3BP2 valence, thereby preventing G3BP1 and G3BP2 ability to undergo liquid-liquid phase separation (LLPS) and assembly of stress granules. Promotes 40S ribosome subunit recycling following ribosome dissociation in response to ribosome stalling by mediating deubiquitination of 40S ribosomal proteins RPS2/us5, RPS3/us3 and RPS10/eS10, thereby preventing their degradation by the proteasome. Part of a ribosome quality control that takes place when ribosomes have stalled during translation initiation (iRQC): USP10 acts by removing monoubiquitination of RPS2/us5 and RPS3/us3, promoting 40S ribosomal subunit recycling. Deubiquitinates CFTR in early endosomes, enhancing its endocytic recycling. Involved in a TANK-dependent negative feedback response to attenuate NF-kappa-B activation via deubiquitinating IKBKG or TRAF6 in response to interleukin-1-beta (IL1B) stimulation or upon DNA damage. Deubiquitinates TBX21 leading to its stabilization. Plays a negative role in the RLR signaling pathway upon RNA virus infection by blocking the RIGI-mediated MAVS activation. Mechanistically, removes the unanchored 'Lys-63'-linked polyubiquitin chains of MAVS to inhibit its aggregation, essential for its activation. This is Ubiquitin carboxyl-terminal hydrolase 10 (Usp10) from Mus musculus (Mouse).